A 226-amino-acid chain; its full sequence is MSESLTWHDVIGNEKQQAYFQQTLQFVESQRQAGKVIYPPAKDVFNAFRFTEFGDVKVVILGQDPYHGPNQAHGLCFSVLPGVKTPPSLVNIYKELAQDIPGFQIPPHGYLQSWAQQGVLLLNTVLTVEQGMAHSHANTGWETFTDRVIDALNQHRNGLIFLLWGSHAQKKGQMIDRQRHHVLMAPHPSPLSAHRGFLGCRHFSKTNQLLQAQGIAPINWQPELES.

Catalysis depends on aspartate 64, which acts as the Proton acceptor.

Belongs to the uracil-DNA glycosylase (UDG) superfamily. UNG family.

The protein localises to the cytoplasm. It catalyses the reaction Hydrolyzes single-stranded DNA or mismatched double-stranded DNA and polynucleotides, releasing free uracil.. Functionally, excises uracil residues from the DNA which can arise as a result of misincorporation of dUMP residues by DNA polymerase or due to deamination of cytosine. This Vibrio cholerae serotype O1 (strain ATCC 39541 / Classical Ogawa 395 / O395) protein is Uracil-DNA glycosylase.